Here is a 359-residue protein sequence, read N- to C-terminus: Histidinol-phosphate aminotransferase (359 aa).

The residue at position 217 (lysine 217) is an N6-(pyridoxal phosphate)lysine.

This sequence belongs to the class-II pyridoxal-phosphate-dependent aminotransferase family. Histidinol-phosphate aminotransferase subfamily. In terms of assembly, homodimer. The cofactor is pyridoxal 5'-phosphate.

It catalyses the reaction L-histidinol phosphate + 2-oxoglutarate = 3-(imidazol-4-yl)-2-oxopropyl phosphate + L-glutamate. The protein operates within amino-acid biosynthesis; L-histidine biosynthesis; L-histidine from 5-phospho-alpha-D-ribose 1-diphosphate: step 7/9. This chain is Histidinol-phosphate aminotransferase, found in Salmonella heidelberg (strain SL476).